Here is a 71-residue protein sequence, read N- to C-terminus: Non-disulfide-bridged peptide 5.5 (71 aa).

A signal peptide spans 1–23 (MKTQFIVLIVAIVFLQLLSQSEA). A Leucine amide modification is found at leucine 36. Residues 40–71 (DLRHLDLDQFDDMFDQPEISAADMKFLQDLLR) constitute a propeptide that is removed on maturation.

The protein belongs to the non-disulfide-bridged peptide (NDBP) superfamily. Short antimicrobial peptide (group 4) family. As to expression, expressed by the venom gland.

The protein localises to the secreted. It localises to the target cell membrane. Antimicrobial peptide. Is active on Mycobacterium abscessus subsp. massiliense (MBC=200 uM), a rapidly growing and emerging pathogen associated with healthcare infections. Also shows antifungal activities. Has a weak hemolytic activity on human erythrocytes (10% at 610 uM), indicating a low toxicity (therapeutic index (TI)=3.05). In addition, treatment of infected macrophages reduces the bacterial load. In vivo, treatment of M.abscessus-infected mice causes a decrease in the bacterial load in the lungs and liver. This Hoffmannihadrurus gertschi (Scorpion) protein is Non-disulfide-bridged peptide 5.5.